We begin with the raw amino-acid sequence, 547 residues long: Chaperonin GroEL (547 aa).

Residues Thr30–Pro33, Lys51, Asp87–Thr91, Gly415, Asn479–Ala481, and Asp495 each bind ATP.

This sequence belongs to the chaperonin (HSP60) family. In terms of assembly, forms a cylinder of 14 subunits composed of two heptameric rings stacked back-to-back. Interacts with the co-chaperonin GroES.

The protein resides in the cytoplasm. The enzyme catalyses ATP + H2O + a folded polypeptide = ADP + phosphate + an unfolded polypeptide.. In terms of biological role, together with its co-chaperonin GroES, plays an essential role in assisting protein folding. The GroEL-GroES system forms a nano-cage that allows encapsulation of the non-native substrate proteins and provides a physical environment optimized to promote and accelerate protein folding. The polypeptide is Chaperonin GroEL (Bordetella bronchiseptica (strain ATCC BAA-588 / NCTC 13252 / RB50) (Alcaligenes bronchisepticus)).